A 204-amino-acid chain; its full sequence is Ribosome maturation factor RimP (204 aa).

The protein belongs to the RimP family.

It is found in the cytoplasm. Functionally, required for maturation of 30S ribosomal subunits. This is Ribosome maturation factor RimP from Albidiferax ferrireducens (strain ATCC BAA-621 / DSM 15236 / T118) (Rhodoferax ferrireducens).